A 264-amino-acid chain; its full sequence is Probable amino-acid-binding protein YxeM (264 aa).

The N-terminal stretch at 1–20 is a signal peptide; it reads MKMKKWTVLVVAALLAVLSA. Cysteine 21 carries N-palmitoyl cysteine lipidation. Cysteine 21 is lipidated: S-diacylglycerol cysteine.

It belongs to the bacterial solute-binding protein 3 family. In terms of assembly, the complex is composed of two ATP-binding proteins (YxeO), two transmembrane proteins (YxeN) and a solute-binding protein (YxeM).

The protein resides in the cell membrane. The protein localises to the membrane raft. Probably part of the ABC transporter complex YxeMNO that could be involved in amino-acid import. May transport S-methylcysteine. The protein is Probable amino-acid-binding protein YxeM (yxeM) of Bacillus subtilis (strain 168).